The primary structure comprises 312 residues: tRNA dimethylallyltransferase (312 aa).

ATP is bound at residue 10-17; sequence GPTAVGKT. A substrate-binding site is contributed by 12-17; that stretch reads TAVGKT. The tract at residues 35 to 38 is interaction with substrate tRNA; it reads DSMQ.

Belongs to the IPP transferase family. As to quaternary structure, monomer. Mg(2+) is required as a cofactor.

It catalyses the reaction adenosine(37) in tRNA + dimethylallyl diphosphate = N(6)-dimethylallyladenosine(37) in tRNA + diphosphate. Catalyzes the transfer of a dimethylallyl group onto the adenine at position 37 in tRNAs that read codons beginning with uridine, leading to the formation of N6-(dimethylallyl)adenosine (i(6)A). This chain is tRNA dimethylallyltransferase, found in Alkaliphilus metalliredigens (strain QYMF).